We begin with the raw amino-acid sequence, 124 residues long: Large-conductance mechanosensitive channel (124 aa).

2 helical membrane passes run 15 to 35 (MDLA…NSLV) and 67 to 87 (GSFL…FFLI).

This sequence belongs to the MscL family. As to quaternary structure, homopentamer.

The protein localises to the cell membrane. In terms of biological role, channel that opens in response to stretch forces in the membrane lipid bilayer. May participate in the regulation of osmotic pressure changes within the cell. The polypeptide is Large-conductance mechanosensitive channel (Lactobacillus johnsonii (strain CNCM I-12250 / La1 / NCC 533)).